Here is a 259-residue protein sequence, read N- to C-terminus: Protein unc-50 homolog (259 aa).

The residue at position 1 (Met1) is an N-acetylmethionine. The Cytoplasmic portion of the chain corresponds to 1–82; the sequence is MLPSTSLSSS…TKDQWARDDP (82 aa). Ser6 carries the post-translational modification Phosphoserine. The chain crosses the membrane as a helical span at residues 83–103; it reads AFLVLLSIWLCVSTIGFGFVL. Residues 104–112 lie on the Lumenal side of the membrane; it reads DMGFFETIK. The helical transmembrane segment at 113–133 threads the bilayer; that stretch reads LLLWVVFIDCVGVGLLISTLM. Over 134–163 the chain is Cytoplasmic; it reads WFVSNKYLVKRQSRDYDVEWGYAFDVHLNA. The chain crosses the membrane as a helical span at residues 164–184; that stretch reads FYPLLVILHFIQLFFINHVIL. At 185 to 187 the chain is on the lumenal side; it reads TDT. A helical membrane pass occupies residues 188–208; that stretch reads FIGYLVGNTLWLIAVGYYIYV. The Cytoplasmic portion of the chain corresponds to 209–222; sequence TFLGYSALPFLKNT. The helical transmembrane segment at 223 to 243 threads the bilayer; that stretch reads VILLYPFAPLMVLYGLSLALG. Over 244 to 259 the chain is Lumenal; the sequence is WNFTHTLCSFYKYRVK.

The protein belongs to the unc-50 family. In terms of tissue distribution, highly expressed in periodontal ligament and bone marrow, but not in gingival fibroblasts.

The protein resides in the nucleus inner membrane. The protein localises to the golgi apparatus membrane. In terms of biological role, involved in the cell surface expression of neuronal nicotinic receptors. Binds RNA. The chain is Protein unc-50 homolog (Unc50) from Mus musculus (Mouse).